A 366-amino-acid chain; its full sequence is Dehydrogenase aclE (366 aa).

The N-terminal stretch at 1 to 19 (MSKRIRLGIVGLSADPSHC) is a signal peptide. An N-linked (GlcNAc...) asparagine glycan is attached at N330.

This sequence belongs to the Gfo/Idh/MocA family.

Its pathway is mycotoxin biosynthesis. Functionally, dehydrogenase; part of the gene cluster that mediates the biosynthesis of aspirochlorine (or antibiotic A30641), an unusual halogenated spiro compound with distinctive antifungal properties due to selective inhibition of protein biosynthesis, and which is also active against bacteria, viruses, and murine tumor cells. The non-ribosomal peptide synthetase (NRPS) aclP is responsible the formation of the diketopiperazine (DKP) core from the condensation of 2 phenylalanine residues. One Phe residue is tailored into chlorotyrosine by hydroxylation and chlorination, whereas the second Phe undergoes an unprecedented C-C bond cleavage to be converted into glycine. After formation of the DKP, sulfur is incorporated into the DKP by conjugation with glutathione by aclG, followed by its stepwise degradation to the thiol by aclI, aclJ and aclK, and the dithiol oxidation by aclT. In addition, oxygenases (aclB, aclC, aclL and aclO) and O-methyltransferases (aclM and aclU) act as tailoring enzymes to produce the intermediate dechloroaspirochlorine. Ultimately, chlorination of dechloroaspirochlorine by the halogenase aclH is the last step in the aspirochlorine pathway. This chain is Dehydrogenase aclE, found in Aspergillus oryzae (strain ATCC 42149 / RIB 40) (Yellow koji mold).